A 131-amino-acid polypeptide reads, in one-letter code: MTDDADLDLVRRTFAAFARGDLAELTQCFAPDVEQFVPGKHALAGVFRGVDNVVACLGDTAAAADGTMTVTLEDVLSNTDGQVIAVYRLRASRAGKVLDQREAILVTVAGGRITRLSEFYADPAATESFWA.

This is an uncharacterized protein from Mycobacterium tuberculosis (strain CDC 1551 / Oshkosh).